The sequence spans 483 residues: Glycogen synthase (483 aa).

K18 is an ADP-alpha-D-glucose binding site.

The protein belongs to the glycosyltransferase 1 family. Bacterial/plant glycogen synthase subfamily.

It carries out the reaction [(1-&gt;4)-alpha-D-glucosyl](n) + ADP-alpha-D-glucose = [(1-&gt;4)-alpha-D-glucosyl](n+1) + ADP + H(+). The protein operates within glycan biosynthesis; glycogen biosynthesis. Synthesizes alpha-1,4-glucan chains using ADP-glucose. The protein is Glycogen synthase of Rhodopseudomonas palustris (strain TIE-1).